Consider the following 41-residue polypeptide: Photosystem II reaction center protein Y (41 aa).

A helical membrane pass occupies residues 7–25; that stretch reads IAIVLAPVVIAASWAVFNI.

This sequence belongs to the PsbY family. PSII is composed of 1 copy each of membrane proteins PsbA, PsbB, PsbC, PsbD, PsbE, PsbF, PsbH, PsbI, PsbJ, PsbK, PsbL, PsbM, PsbT, PsbX, PsbY, PsbZ, Psb30/Ycf12, peripheral proteins PsbO, CyanoQ (PsbQ), PsbU, PsbV and a large number of cofactors. It forms dimeric complexes.

The protein resides in the cellular thylakoid membrane. Loosely associated component of the core of photosystem II (PSII), it is not always seen in crystals. PSII is a light-driven water plastoquinone oxidoreductase, using light energy to abstract electrons from H(2)O, generating a proton gradient subsequently used for ATP formation. The protein is Photosystem II reaction center protein Y of Nostoc punctiforme (strain ATCC 29133 / PCC 73102).